The primary structure comprises 422 residues: UDP-N-acetylglucosamine 1-carboxyvinyltransferase (422 aa).

Residue Lys22 to Asn23 coordinates phosphoenolpyruvate. A UDP-N-acetyl-alpha-D-glucosamine-binding site is contributed by Arg95. Cys119 serves as the catalytic Proton donor. At Cys119 the chain carries 2-(S-cysteinyl)pyruvic acid O-phosphothioketal. UDP-N-acetyl-alpha-D-glucosamine-binding positions include Arg124–Gln128, Asp309, and Val331.

This sequence belongs to the EPSP synthase family. MurA subfamily.

It is found in the cytoplasm. It carries out the reaction phosphoenolpyruvate + UDP-N-acetyl-alpha-D-glucosamine = UDP-N-acetyl-3-O-(1-carboxyvinyl)-alpha-D-glucosamine + phosphate. The protein operates within cell wall biogenesis; peptidoglycan biosynthesis. In terms of biological role, cell wall formation. Adds enolpyruvyl to UDP-N-acetylglucosamine. This is UDP-N-acetylglucosamine 1-carboxyvinyltransferase from Anaeromyxobacter sp. (strain K).